We begin with the raw amino-acid sequence, 275 residues long: NADPH-dependent 7-cyano-7-deazaguanine reductase (275 aa).

81–83 (IES) lines the substrate pocket. An NADPH-binding site is contributed by 83 to 84 (SK). The active-site Thioimide intermediate is cysteine 181. The active-site Proton donor is the aspartate 188. 220-221 (HE) contributes to the substrate binding site. Position 249–250 (249–250 (RG)) interacts with NADPH.

It belongs to the GTP cyclohydrolase I family. QueF type 2 subfamily. Homodimer.

It is found in the cytoplasm. It carries out the reaction 7-aminomethyl-7-carbaguanine + 2 NADP(+) = 7-cyano-7-deazaguanine + 2 NADPH + 3 H(+). It participates in tRNA modification; tRNA-queuosine biosynthesis. Catalyzes the NADPH-dependent reduction of 7-cyano-7-deazaguanine (preQ0) to 7-aminomethyl-7-deazaguanine (preQ1). This Xylella fastidiosa (strain 9a5c) protein is NADPH-dependent 7-cyano-7-deazaguanine reductase.